The chain runs to 1533 residues: MGHSKQIRTLLLNEMEKLEKTLFRLEQGFELQFRLGPTLQGKAVTVYTNYPFPGETFNREKFHSLQWENPTEREDDSDKYCKLNLQQAGSFQYYFLQGNEKSGGGYIVVDPILRVGADNHVLPLDCVTLQTFLTKCLGPFDEWESRLRVAKESGYNMIHFTPLQTLGLSRSSYSLADQLELNPDFSRPNKKYTWHDVGQLVEKLKKEWDILCITDVVYNHTAANSKWIHEHPESAYNLVNSPHLKPAWVLDRALWHLSCDVAEGKYREKGVPALIENDHQMNCIRKIIWEDIYPKIHLWEFFQVDVHKAVEQFRGLLTQENRKIISQPDPKQHLKIIQDPEYRRLGCTVDMNIALATFIPHDNGPAAIDECCNWFRKRIEELNAEKHQLVNYHQEQAVNCLLGNVFYERLAGHGPKLGPVTRKHPLVTRYFTFPFEEMTPSTEESMIHLPNKACFLMAHNGWVMGDDPLRNFAEPGSDVYLRRELICWGDSVKLRYGNKPEDCPYLWAHMKKYTEITATHFQGVRLDNCHSTPIHVAEYMLDAARKLQPNLYVVAELFTGSEDLDNIFVTRLGISSLIREAMSAADSHEEGRLVYRYGGEPVGSFVQPCLRPLMPAIAHALFMDITHDNECPIVHRSAYDALPSSTIVSMASCASGSTKGYDELVPHQISVVSEERFYTKWNPEALPSNTGEVNFQSGIIAARRAINKLHQELGAKGFIQVYVDQVDQDIVAVTRHSPSIHQSVVSVSRTAFRNPKTSFYSKEVPHMYIPGKIEEVVLEARTIERHTIPYKKDENSINGMPDITVEIREHIQLNESKIVKHAGIVTKGPNEFVQEIEFENLTPGSVIIFRVSLDPHAQVAVGILRNHLTQFSPHFKSGSLAVDNADPILKIPFASIASKLTLAELNQVLYRCESEEQEDGGGCYNIPNWSSLKYAGLQGLMSILAEIRPRNDLGHPFCDNLRSGDWMIDYVSSRLISRSGTIAEVGKWLQAMFLYLKQIPRYLIPCYFDAILIGAYTTLLDIAWKQMSSFVQNGSTFVKHLSLGSVQMCGVGKFPSLPLLSPSLTDLPYRVNEITKEKEQCCGSLAAGLPHFSAGIFRCWGRDTFIALRGLLLVTGRYLEARNIILAFAGTLRHGLIPNLLGEGTHARYNCRDAVWWWLQCIQDYCKIVPNGLDILRCPVSRMYPTDDSVPLSAGTVDQPLFEVIQEAMQRHVQGIQFRERNAGPQIDRNMKDEGFNITAGVDEETGFVYGGNRFNCGTWMDKMGESDRARNRGIPATPRDGSAVEIVGLSKSAVRWLLELSRKNIFPYHEVRVKRHGKFVTVSYDEWNRKIQDNFEKLFHVSEDPSDFNEKHPELVHKRGIYKDSYGASSPWCDYQLRPNFTIAMVVAPELFTPEKAWKALEIAEKKLLGPLGMKTLDPDDMVYCGIYDNALDNDNYNLAKGFNYHQGPEWLWPTGYFLRAKLYFSKLMGPETNAKTMFLVKNVLSRHYVHLERSPWKGLPELTNENGQYCPFSCETQAWSIATVLETLYDL.

Residue serine 64 is modified to Phosphoserine. Catalysis depends on residues aspartate 527, histidine 530, and aspartate 628.

Belongs to the glycogen debranching enzyme family. Monomer. Interacts with NHLRC1/malin. Post-translationally, ubiquitinated. In terms of tissue distribution, ubiquitous. Expressed in striated skeletal muscle, heart, liver, spleen, skin, spinal cord, lung, kidney and testicle.

It is found in the cytoplasm. The enzyme catalyses Transfers a segment of a (1-&gt;4)-alpha-D-glucan to a new position in an acceptor, which may be glucose or a (1-&gt;4)-alpha-D-glucan.. It carries out the reaction Hydrolysis of (1-&gt;6)-alpha-D-glucosidic branch linkages in glycogen phosphorylase limit dextrin.. Functionally, multifunctional enzyme acting as 1,4-alpha-D-glucan:1,4-alpha-D-glucan 4-alpha-D-glycosyltransferase and amylo-1,6-glucosidase in glycogen degradation. The polypeptide is Glycogen debranching enzyme (Equus caballus (Horse)).